The primary structure comprises 143 residues: Small ribosomal subunit protein uS11c (143 aa).

The protein belongs to the universal ribosomal protein uS11 family. In terms of assembly, part of the 30S ribosomal subunit.

Its subcellular location is the plastid. It localises to the chloroplast. The protein is Small ribosomal subunit protein uS11c of Oryza nivara (Indian wild rice).